The primary structure comprises 192 residues: T-cell surface glycoprotein CD3 epsilon chain (192 aa).

Positions 1–21 (MQTGNLWQVLGLCLLLVGAWA) are cleaved as a signal peptide. Over 22–111 (QDDTEQNPYE…RVCKNCMEVN (90 aa)) the chain is Extracellular. The region spanning 27 to 98 (QNPYEVSISG…GNTEAAHTLY (72 aa)) is the Ig-like domain. Cysteines 43 and 84 form a disulfide. A helical membrane pass occupies residues 112–137 (LLEVATIIVVDICVTLGLLLLVYYWS). Residues 138–192 (KSRKAKATPMTRGAGAGGRPRGQNRERPPPVPNPDYEPIRKGQRDLYSGLNQRGV) lie on the Cytoplasmic side of the membrane. The interval 146-192 (PMTRGAGAGGRPRGQNRERPPPVPNPDYEPIRKGQRDLYSGLNQRGV) is disordered. Residues 160-177 (QNRERPPPVPNPDYEPIR) form an NUMB-binding region region. Residues 163–190 (ERPPPVPNPDYEPIRKGQRDLYSGLNQR) form the ITAM domain. The tract at residues 164-171 (RPPPVPNP) is proline-rich sequence. Phosphotyrosine is present on residues Y173 and Y184.

The TCR-CD3 complex is composed of a CD3D/CD3E and a CD3G/CD3E heterodimers that preferentially associate with TCRalpha and TCRbeta, respectively, to form TCRalpha/CD3E/CD3G and TCRbeta/CD3G/CD3E trimers. In turn, the hexamer interacts with CD3Z homodimer to form the TCR-CD3 complex. Alternatively, TCRalpha and TCRbeta can be replaced by TCRgamma and TCRdelta. Interacts with CD6. Interacts (via Proline-rich sequence) with NCK1; the interaction is ligand dependent but independent of tyrosine kinase activation. In terms of processing, phosphorylated on Tyr residues after T-cell receptor triggering by LCK in association with CD4/CD8.

Its subcellular location is the cell membrane. Its function is as follows. Part of the TCR-CD3 complex present on T-lymphocyte cell surface that plays an essential role in adaptive immune response. When antigen presenting cells (APCs) activate T-cell receptor (TCR), TCR-mediated signals are transmitted across the cell membrane by the CD3 chains CD3D, CD3E, CD3G and CD3Z. All CD3 chains contain immunoreceptor tyrosine-based activation motifs (ITAMs) in their cytoplasmic domain. Upon TCR engagement, these motifs become phosphorylated by Src family protein tyrosine kinases LCK and FYN, resulting in the activation of downstream signaling pathways. In addition of this role of signal transduction in T-cell activation, CD3E plays an essential role in correct T-cell development. Also participates in internalization and cell surface down-regulation of TCR-CD3 complexes via endocytosis sequences present in CD3E cytosolic region. In addition to its role as a TCR coreceptor, it serves as a receptor for ITPRIPL1. Ligand recognition inhibits T-cell activation by promoting interaction with NCK1, which prevents CD3E-ZAP70 interaction and blocks the ERK-NFkB signaling cascade and calcium influx. The protein is T-cell surface glycoprotein CD3 epsilon chain (CD3E) of Ovis aries (Sheep).